We begin with the raw amino-acid sequence, 281 residues long: Undecaprenyl-diphosphatase (281 aa).

The next 8 helical transmembrane spans lie at 2 to 22 (FDLIKAIIIGIIEGLTEFLPV), 46 to 66 (AFSSVFDYSIQLGAIFAVIQL), 93 to 113 (VIVGVLPAIVFGFALNDFMDA), 115 to 135 (LMNFWVVSATLIIYGIAFIVI), 152 to 172 (ITFKLALYIGLFQVLSIVPGT), 190 to 210 (FVAAEFSFFLSIPVMFGVTFL), 228 to 248 (IVMLVGFIVSWIVAWFAIKFM), and 259 to 279 (VFGYYRIIIGAIFLVFGILGI).

This sequence belongs to the UppP family.

It is found in the cell membrane. It carries out the reaction di-trans,octa-cis-undecaprenyl diphosphate + H2O = di-trans,octa-cis-undecaprenyl phosphate + phosphate + H(+). Catalyzes the dephosphorylation of undecaprenyl diphosphate (UPP). Confers resistance to bacitracin. This Leuconostoc mesenteroides subsp. mesenteroides (strain ATCC 8293 / DSM 20343 / BCRC 11652 / CCM 1803 / JCM 6124 / NCDO 523 / NBRC 100496 / NCIMB 8023 / NCTC 12954 / NRRL B-1118 / 37Y) protein is Undecaprenyl-diphosphatase.